Consider the following 242-residue polypeptide: Tryptophan synthase alpha chain (242 aa).

Catalysis depends on proton acceptor residues Glu-31 and Asp-42.

It belongs to the TrpA family. Tetramer of two alpha and two beta chains.

The enzyme catalyses (1S,2R)-1-C-(indol-3-yl)glycerol 3-phosphate + L-serine = D-glyceraldehyde 3-phosphate + L-tryptophan + H2O. It functions in the pathway amino-acid biosynthesis; L-tryptophan biosynthesis; L-tryptophan from chorismate: step 5/5. Its function is as follows. The alpha subunit is responsible for the aldol cleavage of indoleglycerol phosphate to indole and glyceraldehyde 3-phosphate. The protein is Tryptophan synthase alpha chain of Staphylococcus aureus (strain USA300).